We begin with the raw amino-acid sequence, 200 residues long: MGTPSYDIKNKGDDMQEEPKVKLHHEKGGDEKEKIIEKETPSQDINNKDTISSYVLRDDTQEIPKMEHEEGGYVKEKIVEKETISQYIIKIEGDDDAQEKLKVEYEEEEYEKEKIVEKETPSQDINNKGDDAQEKPKVEHEEGDDKETPSQDIIKMEGEGALEITKVVCEKIIVREDLAVQSKPPSKRDPPKMQTDNNKL.

Residues 1 to 33 (MGTPSYDIKNKGDDMQEEPKVKLHHEKGGDEKE) are disordered. 2 consecutive propeptides follow at residues 1–178 (MGTP…REDL) and 197–200 (NNKL). The stretch at 3-8 (TPSYDI) is one 1; truncated repeat. Basic and acidic residues predominate over residues 8–33 (IKNKGDDMQEEPKVKLHHEKGGDEKE). 4 repeat units span residues 37 to 45 (EKETPSQDI), 80 to 88 (EKETISQYI), 117 to 125 (EKETPSQDI), and 145 to 153 (DKETPSQDI). 2 disordered regions span residues 106–159 (EEEE…MEGE) and 178–200 (LAVQ…NNKL). Composition is skewed to basic and acidic residues over residues 111–140 (EKEK…KVEH) and 146–158 (KETP…KMEG).

In terms of tissue distribution, all organs except the roots. Transported out of wounds to distal tissues.

It is found in the cytoplasm. Functionally, activates a lipid-based signal transduction pathway in which linolenic acid is converted to jasmonic acid, a potent activator of defense gene transcription, including proteinase inhibitor. The protein is Systemin of Solanum lycopersicum (Tomato).